Consider the following 216-residue polypeptide: Probable csgAB operon transcriptional regulatory protein (216 aa).

The HTH luxR-type domain occupies 149–214; the sequence is NSTESALLTH…QAVSWANDNL (66 aa). A DNA-binding region (H-T-H motif) is located at residues 173–192; sequence NNEIARSLFISENTVKTHLY.

Functionally, the master regulator for adhesive curli fimbriae expression; necessary for transcription of the csgAB operon. Plays a positive role in biofilm formation. This is Probable csgAB operon transcriptional regulatory protein from Salmonella typhimurium (strain LT2 / SGSC1412 / ATCC 700720).